We begin with the raw amino-acid sequence, 374 residues long: Chaperone protein DnaJ (374 aa).

The J domain occupies 5–70 (DYYEVLGVNL…RKRASYDQFG (66 aa)). A CR-type zinc finger spans residues 133 to 210 (GLSRTIKVPT…CHGQGRQQQT (78 aa)). Positions 146, 149, 162, 165, 184, 187, 198, and 201 each coordinate Zn(2+). 4 CXXCXGXG motif repeats span residues 146 to 153 (CKTCNGSG), 162 to 169 (CPRCNGSG), 184 to 191 (CSVCRGRG), and 198 to 205 (CTDCHGQG).

The protein belongs to the DnaJ family. In terms of assembly, homodimer. The cofactor is Zn(2+).

It is found in the cytoplasm. In terms of biological role, participates actively in the response to hyperosmotic and heat shock by preventing the aggregation of stress-denatured proteins and by disaggregating proteins, also in an autonomous, DnaK-independent fashion. Unfolded proteins bind initially to DnaJ; upon interaction with the DnaJ-bound protein, DnaK hydrolyzes its bound ATP, resulting in the formation of a stable complex. GrpE releases ADP from DnaK; ATP binding to DnaK triggers the release of the substrate protein, thus completing the reaction cycle. Several rounds of ATP-dependent interactions between DnaJ, DnaK and GrpE are required for fully efficient folding. Also involved, together with DnaK and GrpE, in the DNA replication of plasmids through activation of initiation proteins. This chain is Chaperone protein DnaJ, found in Coxiella burnetii (strain RSA 331 / Henzerling II).